The primary structure comprises 278 residues: Msm operon regulatory protein (278 aa).

An HTH araC/xylS-type domain is found at asparagine 176–glutamate 274. 2 DNA-binding regions (H-T-H motif) span residues asparagine 193–threonine 214 and isoleucine 241–phenylalanine 264.

Its function is as follows. Regulatory protein for the msm operon for multiple sugar metabolism. Activates the transcription of the msmEFGK, aga, dexB and gftA genes. The protein is Msm operon regulatory protein (msmR) of Streptococcus mutans serotype c (strain ATCC 700610 / UA159).